Reading from the N-terminus, the 456-residue chain is Bifunctional protein GlmU (456 aa).

The tract at residues 1–229 (MLNNAMSVVI…LSEVEGVNNR (229 aa)) is pyrophosphorylase. UDP-N-acetyl-alpha-D-glucosamine is bound by residues 11–14 (LAAG), lysine 25, glutamine 76, 81–82 (GT), 103–105 (YGD), glycine 140, glutamate 154, asparagine 169, and asparagine 227. Position 105 (aspartate 105) interacts with Mg(2+). Asparagine 227 contacts Mg(2+). Residues 230-250 (LQLSRLERVYQSEQAEKLLLA) are linker. Residues 251 to 456 (GVMLRDPARF…EGWRRPVKKK (206 aa)) are N-acetyltransferase. Positions 333 and 351 each coordinate UDP-N-acetyl-alpha-D-glucosamine. Histidine 363 (proton acceptor) is an active-site residue. Residues tyrosine 366 and asparagine 377 each coordinate UDP-N-acetyl-alpha-D-glucosamine. Acetyl-CoA is bound by residues alanine 380, 386 to 387 (NY), serine 405, alanine 423, and arginine 440.

In the N-terminal section; belongs to the N-acetylglucosamine-1-phosphate uridyltransferase family. The protein in the C-terminal section; belongs to the transferase hexapeptide repeat family. In terms of assembly, homotrimer. The cofactor is Mg(2+).

Its subcellular location is the cytoplasm. It carries out the reaction alpha-D-glucosamine 1-phosphate + acetyl-CoA = N-acetyl-alpha-D-glucosamine 1-phosphate + CoA + H(+). The catalysed reaction is N-acetyl-alpha-D-glucosamine 1-phosphate + UTP + H(+) = UDP-N-acetyl-alpha-D-glucosamine + diphosphate. It functions in the pathway nucleotide-sugar biosynthesis; UDP-N-acetyl-alpha-D-glucosamine biosynthesis; N-acetyl-alpha-D-glucosamine 1-phosphate from alpha-D-glucosamine 6-phosphate (route II): step 2/2. The protein operates within nucleotide-sugar biosynthesis; UDP-N-acetyl-alpha-D-glucosamine biosynthesis; UDP-N-acetyl-alpha-D-glucosamine from N-acetyl-alpha-D-glucosamine 1-phosphate: step 1/1. Its pathway is bacterial outer membrane biogenesis; LPS lipid A biosynthesis. Catalyzes the last two sequential reactions in the de novo biosynthetic pathway for UDP-N-acetylglucosamine (UDP-GlcNAc). The C-terminal domain catalyzes the transfer of acetyl group from acetyl coenzyme A to glucosamine-1-phosphate (GlcN-1-P) to produce N-acetylglucosamine-1-phosphate (GlcNAc-1-P), which is converted into UDP-GlcNAc by the transfer of uridine 5-monophosphate (from uridine 5-triphosphate), a reaction catalyzed by the N-terminal domain. The protein is Bifunctional protein GlmU of Escherichia coli O45:K1 (strain S88 / ExPEC).